The chain runs to 375 residues: MKAGATSMWASCCGLLNEVMGTGAVRGQQSGFAGGTGPFRFTPNSDFSAYPPASAEGPNIVCKACGLSFSVFRKKHVCCDCKKDFCSVCSVLQENLRRCSTCHLLQETAFQRPQLMRLKVKDLRQYLILRNIPIDTCREKEDLVDLVLCHHRLGSEDDLDTSSLNSSRSQTSSFFTHSFFSNYTAPSATASSFQGELMGGDRTLGSGALAQEPSEIASANTEDDEDDDDDDDDDDDDDEENLEDRTPGLTKKRVRASLSDLSSLEDVEGMSVRQLKEILARNFVNYSGCCEKWELVEKVNRLYKENEENQKSYGERLQLQDEEDDSLCRICMDAVIDCVLLECGHMVTCTKCGKRMSECPICRQYVVRAVHVFKS.

The FYVE-type zinc-finger motif lies at 56–107; that stretch reads EGPNIVCKACGLSFSVFRKKHVCCDCKKDFCSVCSVLQENLRRCSTCHLLQE. Residues 115–134 enclose the SAP 1 domain; sequence LMRLKVKDLRQYLILRNIPI. Phosphoserine is present on Ser169. The tract at residues 202–250 is disordered; sequence RTLGSGALAQEPSEIASANTEDDEDDDDDDDDDDDDDEENLEDRTPGLT. The segment covering 221–242 has biased composition (acidic residues); sequence TEDDEDDDDDDDDDDDDDEENL. 2 positions are modified to phosphoserine: Ser257 and Ser259. Residues 267-281 form the SAP 2 domain; the sequence is VEGMSVRQLKEILAR. An RING-type zinc finger spans residues 328-363; it reads CRICMDAVIDCVLLECGHMVTCTKCGKRMSECPICR.

As to quaternary structure, interacts with CASP8 and CASP10. Interacts with p53/TP53; involved in p53/TP53 ubiquitination. Interacts (via RING-type zinc finger) with MDM2; the interaction stabilizes MDM2. Interacts (via RING-type zinc finger) with PPARGC1A. Interacts with NOD1. Post-translationally, autoubiquitinated (in vitro). Proteolytically cleaved by caspases upon induction of apoptosis by TNF.

Its subcellular location is the cell membrane. The protein resides in the endomembrane system. The protein localises to the nucleus. It is found in the nucleus speckle. It localises to the cytoplasm. Its subcellular location is the cytosol. The catalysed reaction is S-ubiquitinyl-[E2 ubiquitin-conjugating enzyme]-L-cysteine + [acceptor protein]-L-lysine = [E2 ubiquitin-conjugating enzyme]-L-cysteine + N(6)-ubiquitinyl-[acceptor protein]-L-lysine.. It functions in the pathway protein modification; protein ubiquitination. In terms of biological role, E3 ubiquitin-protein ligase that regulates several biological processes through the ubiquitin-mediated proteasomal degradation of various target proteins. Ubiquitinates the caspases CASP8 and CASP10, promoting their proteasomal degradation, to negatively regulate cell death downstream of death domain receptors in the extrinsic pathway of apoptosis. May mediate 'Lys-48'-linked polyubiquitination of RIPK1 and its subsequent proteasomal degradation thereby indirectly regulating the tumor necrosis factor-mediated signaling pathway. Negatively regulates p53/TP53 through its direct ubiquitination and targeting to proteasomal degradation. Indirectly, may also negatively regulate p53/TP53 through ubiquitination and degradation of SFN. Mediates PPARGC1A proteasomal degradation probably through ubiquitination thereby indirectly regulating the metabolism of brown fat cells. Possibly involved in innate immunity, through 'Lys-48'-linked polyubiquitination of NOD1 and its subsequent proteasomal degradation. The protein is E3 ubiquitin-protein ligase RNF34 (RNF34) of Bos taurus (Bovine).